A 956-amino-acid chain; its full sequence is Thrombospondin-3 (956 aa).

The N-terminal stretch at 1 to 21 is a signal peptide; the sequence is MEKPELWGVLALLLLCSYTCG. In terms of domain architecture, Laminin G-like spans 22–193; sequence SQDLQVIDLL…VESMKIILGG (172 aa). Intrachain disulfides connect C278–C289, C283–C300, C303–C314, C320–C332, C326–C341, C344–C368, C374–C388, C382–C397, C400–C412, C418–C432, C426–C442, C444–C455, C471–C478, C483–C503, C519–C539, C542–C562, C578–C598, C601–C621, C639–C659, C679–C699, and C715–C936. N-linked (GlcNAc...) asparagine glycosylation occurs at N310. Positions 316–354 constitute an EGF-like 1; calcium-binding domain; it reads DINECAHADPCFPGSSCINTMPGFHCEACPPGYKGTRVS. An EGF-like 2; calcium-binding domain is found at 370–410; that stretch reads DIDECNDGNNGGCDPNSICTNTVGSFKCGPCRLGFLGNQSQ. N-linked (GlcNAc...) asparagine glycosylation is present at N407. The EGF-like 3 domain maps to 414–456; it reads PARTCHSPAHSPCHIHAHCLFERNGAVSCQCNVGWAGNGNVCG. TSP type-3 repeat units lie at residues 457 to 491, 492 to 527, 528 to 550, 551 to 586, 587 to 609, 610 to 647, 648 to 687, and 688 to 723; these read PDTD…NSGQ, EDAD…NKDQ, QNSD…NNDQ, KDTD…NPLQ, TDRD…NPTQ, TDAD…NSSQ, LDSD…NPNQ, and KDSD…EVTL. Disordered regions lie at residues 518 to 537 and 546 to 699; these read NCRL…SFGD and PNND…GDVC. The segment covering 555 to 568 has biased composition (acidic residues); sequence GNGEGDACDNDVDG. The span at 612 to 628 shows a compositional bias: acidic residues; it reads ADSDLVGDVCDTNEDSD. The N-linked (GlcNAc...) asparagine glycan is linked to N644. The span at 650–667 shows a compositional bias: acidic residues; sequence SDNDGLGDECDGDDDNDG. The TSP C-terminal domain occupies 727–941; the sequence is RAYQTVILDP…LQYRCNDTVP (215 aa). An N-linked (GlcNAc...) asparagine glycan is attached at N937.

It belongs to the thrombospondin family. In terms of assembly, oligomer; disulfide-linked. Brain, lung and cartilage.

In terms of biological role, adhesive glycoprotein that mediates cell-to-cell and cell-to-matrix interactions. Can bind to fibrinogen, fibronectin, laminin and type V collagen. This chain is Thrombospondin-3 (Thbs3), found in Mus musculus (Mouse).